Consider the following 491-residue polypeptide: Anthranilate synthase component 1 (491 aa).

L-tryptophan-binding positions include S49 and 271-273 (PYL). 306 to 307 (GT) contacts chorismate. E333 contributes to the Mg(2+) binding site. Chorismate is bound by residues Y421, R441, 455-457 (GAG), and G457. E470 is a binding site for Mg(2+).

It belongs to the anthranilate synthase component I family. Heterotetramer consisting of two non-identical subunits: a beta subunit (TrpG) and a large alpha subunit (TrpE). Mg(2+) serves as cofactor.

It catalyses the reaction chorismate + L-glutamine = anthranilate + pyruvate + L-glutamate + H(+). Its pathway is amino-acid biosynthesis; L-tryptophan biosynthesis; L-tryptophan from chorismate: step 1/5. Feedback inhibited by tryptophan. Functionally, part of a heterotetrameric complex that catalyzes the two-step biosynthesis of anthranilate, an intermediate in the biosynthesis of L-tryptophan. In the first step, the glutamine-binding beta subunit (TrpG) of anthranilate synthase (AS) provides the glutamine amidotransferase activity which generates ammonia as a substrate that, along with chorismate, is used in the second step, catalyzed by the large alpha subunit of AS (TrpE) to produce anthranilate. In the absence of TrpG, TrpE can synthesize anthranilate directly from chorismate and high concentrations of ammonia. This Neisseria meningitidis serogroup A / serotype 4A (strain DSM 15465 / Z2491) protein is Anthranilate synthase component 1 (trpE).